Reading from the N-terminus, the 844-residue chain is Eukaryotic translation elongation factor 2 (844 aa).

The tr-type G domain occupies 17–348; sequence RNIRNMSVIA…MIAIHLPSPV (332 aa). 26–33 lines the GTP pocket; that stretch reads AHVDHGKS. Phosphothreonine occurs at positions 57 and 59. GTP is bound by residues 162–165 and 219–221; these read NKMD and SGL. H701 carries the post-translational modification Diphthamide.

Belongs to the TRAFAC class translation factor GTPase superfamily. Classic translation factor GTPase family. EF-G/EF-2 subfamily. In terms of processing, phosphorylation by EF-2 kinase completely inactivates eEF2.

It is found in the cytoplasm. The enzyme catalyses GTP + H2O = GDP + phosphate + H(+). Functionally, catalyzes the GTP-dependent ribosomal translocation step during translation elongation. During this step, the ribosome changes from the pre-translocational (PRE) to the post-translocational (POST) state as the newly formed A-site-bound peptidyl-tRNA and P-site-bound deacylated tRNA move to the P and E sites, respectively. Catalyzes the coordinated movement of the two tRNA molecules, the mRNA and conformational changes in the ribosome. The polypeptide is Eukaryotic translation elongation factor 2 (Drosophila melanogaster (Fruit fly)).